The sequence spans 316 residues: Homoserine kinase (316 aa).

An ATP-binding site is contributed by 97-107 (PPARGLGSSAS).

It belongs to the GHMP kinase family. Homoserine kinase subfamily.

It is found in the cytoplasm. The enzyme catalyses L-homoserine + ATP = O-phospho-L-homoserine + ADP + H(+). Its pathway is amino-acid biosynthesis; L-threonine biosynthesis; L-threonine from L-aspartate: step 4/5. Its function is as follows. Catalyzes the ATP-dependent phosphorylation of L-homoserine to L-homoserine phosphate. In Prochlorococcus marinus (strain MIT 9313), this protein is Homoserine kinase.